A 123-amino-acid chain; its full sequence is Small ribosomal subunit protein uS13 (123 aa).

The tract at residues Arg-93–Lys-123 is disordered.

This sequence belongs to the universal ribosomal protein uS13 family. In terms of assembly, part of the 30S ribosomal subunit. Forms a loose heterodimer with protein S19. Forms two bridges to the 50S subunit in the 70S ribosome.

Functionally, located at the top of the head of the 30S subunit, it contacts several helices of the 16S rRNA. In the 70S ribosome it contacts the 23S rRNA (bridge B1a) and protein L5 of the 50S subunit (bridge B1b), connecting the 2 subunits; these bridges are implicated in subunit movement. Contacts the tRNAs in the A and P-sites. The sequence is that of Small ribosomal subunit protein uS13 from Clostridium botulinum (strain Loch Maree / Type A3).